Reading from the N-terminus, the 236-residue chain is Phosphoribosylaminoimidazole-succinocarboxamide synthase (236 aa).

Belongs to the SAICAR synthetase family.

It carries out the reaction 5-amino-1-(5-phospho-D-ribosyl)imidazole-4-carboxylate + L-aspartate + ATP = (2S)-2-[5-amino-1-(5-phospho-beta-D-ribosyl)imidazole-4-carboxamido]succinate + ADP + phosphate + 2 H(+). It functions in the pathway purine metabolism; IMP biosynthesis via de novo pathway; 5-amino-1-(5-phospho-D-ribosyl)imidazole-4-carboxamide from 5-amino-1-(5-phospho-D-ribosyl)imidazole-4-carboxylate: step 1/2. This is Phosphoribosylaminoimidazole-succinocarboxamide synthase from Pelodictyon phaeoclathratiforme (strain DSM 5477 / BU-1).